Consider the following 426-residue polypeptide: Serine--tRNA ligase (426 aa).

235–237 is an L-serine binding site; the sequence is TAE. 266-268 is an ATP binding site; it reads RRE. Glutamate 289 contacts L-serine. An ATP-binding site is contributed by 353 to 356; sequence EISS. Serine 389 is a binding site for L-serine.

This sequence belongs to the class-II aminoacyl-tRNA synthetase family. Type-1 seryl-tRNA synthetase subfamily. As to quaternary structure, homodimer. The tRNA molecule binds across the dimer.

The protein resides in the cytoplasm. It catalyses the reaction tRNA(Ser) + L-serine + ATP = L-seryl-tRNA(Ser) + AMP + diphosphate + H(+). It carries out the reaction tRNA(Sec) + L-serine + ATP = L-seryl-tRNA(Sec) + AMP + diphosphate + H(+). It participates in aminoacyl-tRNA biosynthesis; selenocysteinyl-tRNA(Sec) biosynthesis; L-seryl-tRNA(Sec) from L-serine and tRNA(Sec): step 1/1. Its function is as follows. Catalyzes the attachment of serine to tRNA(Ser). Is also able to aminoacylate tRNA(Sec) with serine, to form the misacylated tRNA L-seryl-tRNA(Sec), which will be further converted into selenocysteinyl-tRNA(Sec). The protein is Serine--tRNA ligase of Nostoc punctiforme (strain ATCC 29133 / PCC 73102).